Consider the following 346-residue polypeptide: Dynein regulatory complex protein 9 (346 aa).

Over residues 299 to 308 the composition is skewed to basic and acidic residues; the sequence is MEKEQREKNA. Positions 299 to 346 are disordered; it reads MEKEQREKNAATKIQAWWRGTLVRKGPRSKKADKSKKKDGKKGKKKRK. The region spanning 305-334 is the IQ domain; it reads EKNAATKIQAWWRGTLVRKGPRSKKADKSK. A compositionally biased stretch (basic residues) spans 323–346; the sequence is KGPRSKKADKSKKKDGKKGKKKRK.

The protein belongs to the DRC9 family. In terms of assembly, component of the nexin-dynein regulatory complex (N-DRC). Interacts (via IQ domain) with calmodulin when calcium levels are low. Does not interact with calmodulin in the presence of Ca(2+). Interacts with hsp70 and may form a complex with camk4 and hsp70. Detected in adult testis, and at lower levels in brain, kidney and ovary.

It is found in the cytoplasm. The protein resides in the cell projection. Its subcellular location is the cilium. It localises to the flagellum. The protein localises to the cytoskeleton. It is found in the flagellum axoneme. Component of the nexin-dynein regulatory complex (N-DRC), a key regulator of ciliary/flagellar motility which maintains the alignment and integrity of the distal axoneme and regulates microtubule sliding in motile axonemes. Binds calmodulin when cellular Ca(2+) levels are low and thereby contributes to the regulation of calcium and calmodulin-dependent protein kinase IV (camk4) activity; contributes to the regulation of camk4 signaling cascades. Plays a role in the regulation of definitive hematopoiesis via its effects on camk4. The polypeptide is Dynein regulatory complex protein 9 (Danio rerio (Zebrafish)).